The sequence spans 1238 residues: Inner capsid protein VP2 (1238 aa).

A disordered region spans residues 1–35 (MSTSAKKTPESKTEDKIEPVIEQTSNDKPEPPPNK). Basic and acidic residues predominate over residues 7–30 (KTPESKTEDKIEPVIEQTSNDKPE).

Belongs to the turreted BTV-fold inner capsid family. In terms of assembly, homodecamer; each decamer is made up of two conformers of VP2, called VP2A and VP2B. 12 homodecamers assemble to form an icosahedral capsid.

The protein localises to the virion. Inner capsid protein that self-assembles to form an icosahedral capsid with a T=2 symmetry, which consists of 120 copies of VP2, with channels at each of its five-fold vertices. This capsid constitutes the innermost concentric layer of the viral mature particle. In Cryphonectria parasitica (Chestnut blight fungus), this protein is Inner capsid protein VP2 (S2).